The sequence spans 507 residues: ATP synthase subunit alpha, chloroplastic (507 aa).

170–177 contributes to the ATP binding site; the sequence is GDRQTGKT.

This sequence belongs to the ATPase alpha/beta chains family. In terms of assembly, F-type ATPases have 2 components, CF(1) - the catalytic core - and CF(0) - the membrane proton channel. CF(1) has five subunits: alpha(3), beta(3), gamma(1), delta(1), epsilon(1). CF(0) has four main subunits: a, b, b' and c.

It is found in the plastid. It localises to the chloroplast thylakoid membrane. The catalysed reaction is ATP + H2O + 4 H(+)(in) = ADP + phosphate + 5 H(+)(out). In terms of biological role, produces ATP from ADP in the presence of a proton gradient across the membrane. The alpha chain is a regulatory subunit. The protein is ATP synthase subunit alpha, chloroplastic of Morus indica (Mulberry).